The sequence spans 138 residues: Cytosolic calcium-binding protein 2 (138 aa).

A compositionally biased stretch (low complexity) spans Thr31–Val41. Residues Thr31–Gln122 are disordered. Tandem repeats lie at residues Val62–Lys68, Glu71–Lys75, Val92–Lys98, Val109–Lys114, Val118–Gln122, and Val131–Lys135. The tract at residues Val62–Lys135 is 6 X 5 AA approximate repeats of V-E-E-K-K. A compositionally biased stretch (basic and acidic residues) spans Glu64–Val85. The span at Glu110–Gln122 shows a compositional bias: basic and acidic residues.

Predominantly expressed in roots (e.g. in endodermis in the stele) and stems, to a lower extent in shoots, flowers and siliques, and, at low levels, in leaves.

The protein localises to the cytoplasm. Its subcellular location is the cytosol. In terms of biological role, binds calcium Ca(2+) and may act as a signal mediator to buffer Ca(2+). The polypeptide is Cytosolic calcium-binding protein 2 (Arabidopsis thaliana (Mouse-ear cress)).